The chain runs to 283 residues: Acetylglutamate kinase (283 aa).

Substrate-binding positions include 63-64, Arg-85, and Asn-179; that span reads GG.

Belongs to the acetylglutamate kinase family. ArgB subfamily.

The protein localises to the cytoplasm. The enzyme catalyses N-acetyl-L-glutamate + ATP = N-acetyl-L-glutamyl 5-phosphate + ADP. It functions in the pathway amino-acid biosynthesis; L-arginine biosynthesis; N(2)-acetyl-L-ornithine from L-glutamate: step 2/4. Catalyzes the ATP-dependent phosphorylation of N-acetyl-L-glutamate. This chain is Acetylglutamate kinase, found in Clostridium kluyveri (strain NBRC 12016).